Reading from the N-terminus, the 89-residue chain is MALEKEEKSQIINNYQLHETDTGSPEVQVALLTERINQLIEHLRVHIHDHHSRRGLLKLVGRRRRLLNYLQSKDRERYRKVINSLGLRR.

Residues 1 to 22 form a disordered region; sequence MALEKEEKSQIINNYQLHETDT. Positions 10 to 22 are enriched in polar residues; that stretch reads QIINNYQLHETDT.

This sequence belongs to the universal ribosomal protein uS15 family. As to quaternary structure, part of the 30S ribosomal subunit. Forms a bridge to the 50S subunit in the 70S ribosome, contacting the 23S rRNA.

In terms of biological role, one of the primary rRNA binding proteins, it binds directly to 16S rRNA where it helps nucleate assembly of the platform of the 30S subunit by binding and bridging several RNA helices of the 16S rRNA. Its function is as follows. Forms an intersubunit bridge (bridge B4) with the 23S rRNA of the 50S subunit in the ribosome. This is Small ribosomal subunit protein uS15 from Chloroflexus aggregans (strain MD-66 / DSM 9485).